Consider the following 499-residue polypeptide: Probable cytosol aminopeptidase (499 aa).

Mn(2+) contacts are provided by Lys271 and Asp276. Lys283 is a catalytic residue. Asp294, Asp353, and Glu355 together coordinate Mn(2+). Arg357 is a catalytic residue.

This sequence belongs to the peptidase M17 family. Mn(2+) serves as cofactor.

Its subcellular location is the cytoplasm. The enzyme catalyses Release of an N-terminal amino acid, Xaa-|-Yaa-, in which Xaa is preferably Leu, but may be other amino acids including Pro although not Arg or Lys, and Yaa may be Pro. Amino acid amides and methyl esters are also readily hydrolyzed, but rates on arylamides are exceedingly low.. The catalysed reaction is Release of an N-terminal amino acid, preferentially leucine, but not glutamic or aspartic acids.. In terms of biological role, presumably involved in the processing and regular turnover of intracellular proteins. Catalyzes the removal of unsubstituted N-terminal amino acids from various peptides. The protein is Probable cytosol aminopeptidase of Bordetella bronchiseptica (strain ATCC BAA-588 / NCTC 13252 / RB50) (Alcaligenes bronchisepticus).